We begin with the raw amino-acid sequence, 346 residues long: L-threonine dehydratase catabolic TdcB (346 aa).

59–60 serves as a coordination point for AMP; it reads FT. Lysine 64 bears the N6-(pyridoxal phosphate)lysine mark. AMP contacts are provided by residues glutamine 94, 125–126, and asparagine 321; that span reads GY.

This sequence belongs to the serine/threonine dehydratase family. As to quaternary structure, in the native structure, TdcB is in a dimeric form, whereas in the TdcB-AMP complex, it exists in a tetrameric form (dimer of dimers). Requires pyridoxal 5'-phosphate as cofactor.

The catalysed reaction is L-threonine = 2-oxobutanoate + NH4(+). Its pathway is amino-acid degradation; L-threonine degradation via propanoate pathway; propanoate from L-threonine: step 1/4. Its activity is regulated as follows. Each protein molecule can bind up to four molecules of AMP, which act as an allosteric activator to the enzyme. Functionally, catalyzes the anaerobic formation of alpha-ketobutyrate and ammonia from threonine in a two-step reaction. The first step involved a dehydration of threonine and a production of enamine intermediates (aminocrotonate), which tautomerizes to its imine form (iminobutyrate). Both intermediates are unstable and short-lived. The second step is the nonenzymatic hydrolysis of the enamine/imine intermediates to form 2-ketobutyrate and free ammonia. In the low water environment of the cell, the second step is accelerated by RidA. This is L-threonine dehydratase catabolic TdcB (tdcB) from Staphylococcus aureus (strain USA300).